Here is a 94-residue protein sequence, read N- to C-terminus: Large ribosomal subunit protein uL22 (94 aa).

This sequence belongs to the universal ribosomal protein uL22 family. As to quaternary structure, part of the 50S ribosomal subunit.

Functionally, this protein binds specifically to 23S rRNA; its binding is stimulated by other ribosomal proteins, e.g. L4, L17, and L20. It is important during the early stages of 50S assembly. It makes multiple contacts with different domains of the 23S rRNA in the assembled 50S subunit and ribosome. The globular domain of the protein is located near the polypeptide exit tunnel on the outside of the subunit, while an extended beta-hairpin is found that lines the wall of the exit tunnel in the center of the 70S ribosome. The chain is Large ribosomal subunit protein uL22 (rplV) from Tomato big bud phytoplasma.